Here is a 245-residue protein sequence, read N- to C-terminus: 6-carboxyhexanoate--CoA ligase (245 aa).

The protein belongs to the BioW family. In terms of assembly, homodimer. Requires Mg(2+) as cofactor.

It catalyses the reaction heptanedioate + ATP + CoA = 6-carboxyhexanoyl-CoA + AMP + diphosphate. The protein operates within metabolic intermediate metabolism; pimeloyl-CoA biosynthesis; pimeloyl-CoA from pimelate: step 1/1. In terms of biological role, catalyzes the transformation of pimelate into pimeloyl-CoA with concomitant hydrolysis of ATP to AMP. This is 6-carboxyhexanoate--CoA ligase from Sulfurihydrogenibium azorense (strain DSM 15241 / OCM 825 / Az-Fu1).